A 308-amino-acid chain; its full sequence is Ribosomal RNA small subunit methyltransferase H (308 aa).

S-adenosyl-L-methionine-binding positions include G32–H34, D51, F78, D99, and Q106.

Belongs to the methyltransferase superfamily. RsmH family.

It localises to the cytoplasm. It carries out the reaction cytidine(1402) in 16S rRNA + S-adenosyl-L-methionine = N(4)-methylcytidine(1402) in 16S rRNA + S-adenosyl-L-homocysteine + H(+). Specifically methylates the N4 position of cytidine in position 1402 (C1402) of 16S rRNA. The chain is Ribosomal RNA small subunit methyltransferase H from Campylobacter curvus (strain 525.92).